A 404-amino-acid chain; its full sequence is Aspartokinase 1 (404 aa).

7 to 10 (KFGG) contacts ATP. 25–30 (HIKEAI) serves as a coordination point for substrate. Ser-41 is an ATP binding site. Residues 52–54 (TDS), Glu-79, 130–131 (LA), 155–158 (RGGS), and Ser-158 contribute to the substrate site. ATP contacts are provided by residues 178 to 179 (TD) and 184 to 189 (MTADPR). Residues 299 to 301 (SVD), 355 to 356 (VT), 369 to 370 (PI), and 376 to 377 (SH) contribute to the substrate site. An ACT domain is found at 344–404 (AVGAGIMGVP…ALHEVFELSK (61 aa)).

The protein belongs to the aspartokinase family. Tetramer consisting of 2 isoforms Alpha (catalytic) and 2 isoforms Beta (function not known).

It carries out the reaction L-aspartate + ATP = 4-phospho-L-aspartate + ADP. It functions in the pathway amino-acid biosynthesis; L-lysine biosynthesis via DAP pathway; (S)-tetrahydrodipicolinate from L-aspartate: step 1/4. Its pathway is amino-acid biosynthesis; L-methionine biosynthesis via de novo pathway; L-homoserine from L-aspartate: step 1/3. It participates in amino-acid biosynthesis; L-threonine biosynthesis; L-threonine from L-aspartate: step 1/5. With respect to regulation, diaminopimelate-sensitive. In terms of biological role, catalyzes the phosphorylation of the beta-carboxyl group of aspartic acid with ATP to yield 4-phospho-L-aspartate, which is involved in the branched biosynthetic pathway leading to the biosynthesis of amino acids threonine, isoleucine and methionine. The sequence is that of Aspartokinase 1 (dapG) from Bacillus subtilis (strain 168).